A 266-amino-acid chain; its full sequence is Putative pyruvate, phosphate dikinase regulatory protein (266 aa).

Position 147–154 (147–154) interacts with ADP; sequence GLSRTSKT.

This sequence belongs to the pyruvate, phosphate/water dikinase regulatory protein family. PDRP subfamily.

It carries out the reaction N(tele)-phospho-L-histidyl/L-threonyl-[pyruvate, phosphate dikinase] + ADP = N(tele)-phospho-L-histidyl/O-phospho-L-threonyl-[pyruvate, phosphate dikinase] + AMP + H(+). The enzyme catalyses N(tele)-phospho-L-histidyl/O-phospho-L-threonyl-[pyruvate, phosphate dikinase] + phosphate + H(+) = N(tele)-phospho-L-histidyl/L-threonyl-[pyruvate, phosphate dikinase] + diphosphate. Functionally, bifunctional serine/threonine kinase and phosphorylase involved in the regulation of the pyruvate, phosphate dikinase (PPDK) by catalyzing its phosphorylation/dephosphorylation. This is Putative pyruvate, phosphate dikinase regulatory protein from Clostridium perfringens (strain 13 / Type A).